Here is a 518-residue protein sequence, read N- to C-terminus: GMP synthase [glutamine-hydrolyzing] (518 aa).

The region spanning 11–203 (SILVLDFGSQ…AFDVCQAEAN (193 aa)) is the Glutamine amidotransferase type-1 domain. Cys-88 functions as the Nucleophile in the catalytic mechanism. Catalysis depends on residues His-177 and Glu-179. The GMPS ATP-PPase domain maps to 204–393 (WSMDDFIDMQ…LGMPSDLVWR (190 aa)). 231-237 (SGGVDSS) serves as a coordination point for ATP.

As to quaternary structure, homodimer.

It carries out the reaction XMP + L-glutamine + ATP + H2O = GMP + L-glutamate + AMP + diphosphate + 2 H(+). The protein operates within purine metabolism; GMP biosynthesis; GMP from XMP (L-Gln route): step 1/1. Its function is as follows. Catalyzes the synthesis of GMP from XMP. This Lactiplantibacillus plantarum (strain ATCC BAA-793 / NCIMB 8826 / WCFS1) (Lactobacillus plantarum) protein is GMP synthase [glutamine-hydrolyzing].